A 209-amino-acid polypeptide reads, in one-letter code: Large ribosomal subunit protein uL3 (209 aa).

Residues 118–150 (GFQGAIKRHGQSRGPMTHGSRYHRRPGSMGPVD) are disordered.

The protein belongs to the universal ribosomal protein uL3 family. As to quaternary structure, part of the 50S ribosomal subunit. Forms a cluster with proteins L14 and L19.

In terms of biological role, one of the primary rRNA binding proteins, it binds directly near the 3'-end of the 23S rRNA, where it nucleates assembly of the 50S subunit. The protein is Large ribosomal subunit protein uL3 of Bacillus pumilus (strain SAFR-032).